The following is a 297-amino-acid chain: Ribosomal protein L11 methyltransferase (297 aa).

Positions 152, 173, 195, and 234 each coordinate S-adenosyl-L-methionine.

The protein belongs to the methyltransferase superfamily. PrmA family.

It is found in the cytoplasm. The catalysed reaction is L-lysyl-[protein] + 3 S-adenosyl-L-methionine = N(6),N(6),N(6)-trimethyl-L-lysyl-[protein] + 3 S-adenosyl-L-homocysteine + 3 H(+). Functionally, methylates ribosomal protein L11. The polypeptide is Ribosomal protein L11 methyltransferase (Cupriavidus pinatubonensis (strain JMP 134 / LMG 1197) (Cupriavidus necator (strain JMP 134))).